The sequence spans 747 residues: Superkiller protein 7 (747 aa).

Residues 14–51 (KSKGLLSADQSHSTSKSASLLERLHKNRETKDNNAETK) are disordered. Positions 21 to 31 (ADQSHSTSKSA) are enriched in polar residues. Positions 35-51 (ERLHKNRETKDNNAETK) are enriched in basic and acidic residues. Residues serine 88 and serine 90 each carry the phosphoserine modification. A disordered region spans residues 89 to 117 (NSDLEKQGKSVTLDSKENELPTKRKSPDD). The 239-residue stretch at 265–503 (PLNLTCLFLG…YVPEWYEGPT (239 aa)) folds into the tr-type G domain. A G1 region spans residues 274–281 (GDTNAGKS). Position 274-281 (274-281 (GDTNAGKS)) interacts with GTP. Residues 331–335 (GFSMF) form a G2 region. The segment at 356 to 359 (DTPG) is G3. GTP-binding positions include 356-360 (DTPGS) and 427-430 (NKAD). The tract at residues 427 to 430 (NKAD) is G4. Residues 467–469 (SGL) are G5.

Belongs to the TRAFAC class translation factor GTPase superfamily. Classic translation factor GTPase family. Interacts with the exosome and with the SKI complex composed of at least SKI2, SKI3 and SKI8. Interacts directly with SKI3 and SKI8.

Its subcellular location is the cytoplasm. Represses the expression of non-poly(A) mRNAs like L-A or M viruses and is therefore involved in antiviral system. Mediates interactions via its N-terminus between the exosome and the SKI complex which operate in the 3'-to-5' mRNA-decay pathway. By interacting with NAM7, is also required for nonsense-mediated 3'-to-5' mRNA-decay (NMD). May recognize a stalled 80S ribosome at the 3'-end of a nonstop mRNA which leads to the recruitment of the exosome and SKI complexes to the mRNAs to be degraded. In Saccharomyces cerevisiae (strain ATCC 204508 / S288c) (Baker's yeast), this protein is Superkiller protein 7 (SKI7).